A 75-amino-acid polypeptide reads, in one-letter code: UPF0352 protein YejL (75 aa).

This sequence belongs to the UPF0352 family.

The sequence is that of UPF0352 protein YejL from Salmonella agona (strain SL483).